A 344-amino-acid polypeptide reads, in one-letter code: Beta-1,4-galactosyltransferase 4 (344 aa).

The Cytoplasmic portion of the chain corresponds to M1–R12. Residues L13 to I38 traverse the membrane as a helical; Signal-anchor for type II membrane protein segment. Topologically, residues Q39–V344 are lumenal. C77 and C118 form a disulfide bridge. UDP-alpha-D-galactose-binding positions include P129–R133, F168–R170, and V195–D196. A disulfide bridge connects residues C189 and C208. Position 196 (D196) interacts with Mn(2+). N-linked (GlcNAc...) asparagine glycosylation occurs at N220. Residues Y224 and W256 each coordinate UDP-alpha-D-galactose. N-acetyl-D-glucosamine is bound at residue G258–D261. H289 provides a ligand contact to Mn(2+). A UDP-alpha-D-galactose-binding site is contributed by H289–R291. Residue R301 participates in N-acetyl-D-glucosamine binding. N-linked (GlcNAc...) asparagine glycosylation occurs at N335.

This sequence belongs to the glycosyltransferase 7 family. It depends on Mn(2+) as a cofactor.

It localises to the golgi apparatus. The protein localises to the golgi stack membrane. The catalysed reaction is N-acetyl-D-glucosamine + UDP-alpha-D-galactose = beta-D-galactosyl-(1-&gt;4)-N-acetyl-D-glucosamine + UDP + H(+). It catalyses the reaction a beta-D-GlcNAc-(1-&gt;3)-beta-D-Gal-(1-&gt;4)-beta-D-Glc-(1&lt;-&gt;1)-Cer(d18:1(4E)) + UDP-alpha-D-galactose = a neolactoside nLc4Cer(d18:1(4E)) + UDP + H(+). It participates in protein modification; protein glycosylation. Functionally, galactose (Gal) transferase involved in the biosynthesis of glycoproteins, proteoglycans, and glycosyphingolipids. Catalyzes the transfer of Gal residue via a beta1-&gt;4 linkage from UDP-Gal to the non-reducing terminal N-acetyl glucosamine 6-O-sulfate (6-O-sulfoGlcNAc) in the linearly growing chain of both N- and O-linked keratan sulfate proteoglycans. Cooperates with B3GNT7 N-acetyl glucosamine transferase and CHST6 and CHST1 sulfotransferases to construct and elongate mono- and disulfated disaccharide units [-&gt;3Galbeta1-&gt;4(6-sulfoGlcNAcbeta)1-&gt;] and [-&gt;3(6-sulfoGalbeta)1-&gt;4(6-sulfoGlcNAcbeta)1-&gt;] within keratan sulfate polymer. This is Beta-1,4-galactosyltransferase 4 (B4GALT4) from Cricetulus griseus (Chinese hamster).